Reading from the N-terminus, the 932-residue chain is MGLTPMMRQYLEVKESCKDCILFFRLGDFYEMFFEDAKVASKELELVLTGRDCGLEERAPMCGIPYHAANTYIGRLVSAGYKIAICEQLEDPSASKGIVKRGIIKIITPGTYTDSSFLEENKNNYIMSFYLDDNMCSMSFADISTGEFNSTHSNFKEAVVLDEISKFAPREIVLEENIKESFIHTIKERFPNISISKIKEENFDYNIDNNLREQFNNFSENEYETIVKKSANGLLYYIFHTQKNILSNINKIDYYSIVDYLTIDVNSRRNLEITENLREKIKKGSLLWVLDKTNTAMGGRQLRRWIEQPLINKTPIENRLNAVEELLNNISLQEDLKEDLKSIYDIERIVGKVASKSVNAKELISLKCSIGKVPYIKKYLSSFKSDLFLNMEQCIDTLEDIHKLLDKALLDNPSLSVKEGNIIKEGFNEEVDSLREAKSNGKKWIASLEQKEKEETGIKSLKVSYNKVFGYFIEITKANLNLVPEGRYIRKQTLSNAERYITPELKEMEEKILGAEEKLIDIEYKLFTEIRDFIEENIDRMQKTARIISDIDCLCSLATVALENNYIKPNINAKDEILIEEGRHPVVEKVIPKGEFISNDSLIDTKENQLILITGPNMAGKSTYMRQVALITIMAQIGSFVPAKEANISICDKIFTRIGASDDLAAGKSTFMVEMWEVSNILKNATSKSLVLLDEVGRGTSTYDGLSIAWSVIEYICNNKNLRCKTLFATHYHELTKLEDNIKGVKNYSVSVSELENEIVFLRKIIRGGADQSYGIEVAKLAGLPSPVINRAKEILQHIEGDKEENSLNITPSKEYKSKDYIEVSKDTLNTKNNLESEIKHDTLSETNTATIIEDESIKEHLCSNKKQIQCKKNNEKSIKKELAVDSFQINFEHIKKDKVIEEIKNIDILNMTPMEGFNKLYDIINKTKDID.

An ATP-binding site is contributed by 615-622 (GPNMAGKS).

Belongs to the DNA mismatch repair MutS family.

This protein is involved in the repair of mismatches in DNA. It is possible that it carries out the mismatch recognition step. This protein has a weak ATPase activity. In Clostridium botulinum (strain Loch Maree / Type A3), this protein is DNA mismatch repair protein MutS.